The sequence spans 366 residues: Holliday junction branch migration complex subunit RuvB (366 aa).

The segment at 1–49 (MAIISSKKQPPEPNGQPNKRPESAPAAPKEKVLQPEAAIDEQGKQEESI) is disordered. Positions 13–210 (PNGQPNKRPE…FGLIQKLRFY (198 aa)) are large ATPase domain (RuvB-L). ATP contacts are provided by residues Ile49, Arg50, Gly91, Lys94, Thr95, Thr96, 157–159 (EDY), Arg200, Tyr210, and Arg247. Thr95 provides a ligand contact to Mg(2+). Positions 211-281 (EVDELSQIVL…IAAEALQLFQ (71 aa)) are small ATPAse domain (RuvB-S). The head domain (RuvB-H) stretch occupies residues 284–366 (PCGLDWTDRR…TPPNEQLSLL (83 aa)). Residues Arg339 and Arg344 each coordinate DNA.

This sequence belongs to the RuvB family. As to quaternary structure, homohexamer. Forms an RuvA(8)-RuvB(12)-Holliday junction (HJ) complex. HJ DNA is sandwiched between 2 RuvA tetramers; dsDNA enters through RuvA and exits via RuvB. An RuvB hexamer assembles on each DNA strand where it exits the tetramer. Each RuvB hexamer is contacted by two RuvA subunits (via domain III) on 2 adjacent RuvB subunits; this complex drives branch migration. In the full resolvosome a probable DNA-RuvA(4)-RuvB(12)-RuvC(2) complex forms which resolves the HJ.

It localises to the cytoplasm. The enzyme catalyses ATP + H2O = ADP + phosphate + H(+). Functionally, the RuvA-RuvB-RuvC complex processes Holliday junction (HJ) DNA during genetic recombination and DNA repair, while the RuvA-RuvB complex plays an important role in the rescue of blocked DNA replication forks via replication fork reversal (RFR). RuvA specifically binds to HJ cruciform DNA, conferring on it an open structure. The RuvB hexamer acts as an ATP-dependent pump, pulling dsDNA into and through the RuvAB complex. RuvB forms 2 homohexamers on either side of HJ DNA bound by 1 or 2 RuvA tetramers; 4 subunits per hexamer contact DNA at a time. Coordinated motions by a converter formed by DNA-disengaged RuvB subunits stimulates ATP hydrolysis and nucleotide exchange. Immobilization of the converter enables RuvB to convert the ATP-contained energy into a lever motion, pulling 2 nucleotides of DNA out of the RuvA tetramer per ATP hydrolyzed, thus driving DNA branch migration. The RuvB motors rotate together with the DNA substrate, which together with the progressing nucleotide cycle form the mechanistic basis for DNA recombination by continuous HJ branch migration. Branch migration allows RuvC to scan DNA until it finds its consensus sequence, where it cleaves and resolves cruciform DNA. The polypeptide is Holliday junction branch migration complex subunit RuvB (Trichormus variabilis (strain ATCC 29413 / PCC 7937) (Anabaena variabilis)).